The chain runs to 363 residues: Spermidine/putrescine import ATP-binding protein PotA (363 aa).

The region spanning 4 to 234 is the ABC transporter domain; that stretch reads LEIRNVTRRF…PRNHFVADFI (231 aa). 36–43 serves as a coordination point for ATP; it reads GPSGCGKT.

The protein belongs to the ABC transporter superfamily. Spermidine/putrescine importer (TC 3.A.1.11.1) family. The complex is composed of two ATP-binding proteins (PotA), two transmembrane proteins (PotB and PotC) and a solute-binding protein (PotD).

The protein localises to the cell inner membrane. It catalyses the reaction ATP + H2O + polyamine-[polyamine-binding protein]Side 1 = ADP + phosphate + polyamineSide 2 + [polyamine-binding protein]Side 1.. Its function is as follows. Part of the ABC transporter complex PotABCD involved in spermidine/putrescine import. Responsible for energy coupling to the transport system. This Nitrosospira multiformis (strain ATCC 25196 / NCIMB 11849 / C 71) protein is Spermidine/putrescine import ATP-binding protein PotA.